Reading from the N-terminus, the 62-residue chain is Photosystem II reaction center protein Z (62 aa).

A run of 2 helical transmembrane segments spans residues 8–28 (LIAAFVALSFAMIIGVPVVFS) and 41–61 (WGGAAAWVVLLFVAALASIVV).

This sequence belongs to the PsbZ family. PSII is composed of 1 copy each of membrane proteins PsbA, PsbB, PsbC, PsbD, PsbE, PsbF, PsbH, PsbI, PsbJ, PsbK, PsbL, PsbM, PsbT, PsbX, PsbY, PsbZ, Psb30/Ycf12, peripheral proteins PsbO, CyanoQ (PsbQ), PsbU, PsbV and a large number of cofactors. It forms dimeric complexes.

The protein resides in the cellular thylakoid membrane. In terms of biological role, may control the interaction of photosystem II (PSII) cores with the light-harvesting antenna, regulates electron flow through the 2 photosystem reaction centers. PSII is a light-driven water plastoquinone oxidoreductase, using light energy to abstract electrons from H(2)O, generating a proton gradient subsequently used for ATP formation. The protein is Photosystem II reaction center protein Z of Acaryochloris marina (strain MBIC 11017).